Here is a 194-residue protein sequence, read N- to C-terminus: Peptidyl-tRNA hydrolase (194 aa).

Residue Tyr-16 participates in tRNA binding. His-21 functions as the Proton acceptor in the catalytic mechanism. TRNA is bound by residues Phe-67, Asn-69, and Asn-115.

This sequence belongs to the PTH family. In terms of assembly, monomer.

The protein localises to the cytoplasm. The enzyme catalyses an N-acyl-L-alpha-aminoacyl-tRNA + H2O = an N-acyl-L-amino acid + a tRNA + H(+). Hydrolyzes ribosome-free peptidyl-tRNAs (with 1 or more amino acids incorporated), which drop off the ribosome during protein synthesis, or as a result of ribosome stalling. Its function is as follows. Catalyzes the release of premature peptidyl moieties from peptidyl-tRNA molecules trapped in stalled 50S ribosomal subunits, and thus maintains levels of free tRNAs and 50S ribosomes. The chain is Peptidyl-tRNA hydrolase from Shigella dysenteriae serotype 1 (strain Sd197).